We begin with the raw amino-acid sequence, 506 residues long: Transcription factor CP2 (506 aa).

Residues 61-300 (ENKILPFQYV…SPGFNSSHNS (240 aa)) form the Grh/CP2 DB domain. The interval 133–395 (EHQQLEGWRW…LFNALKGRIV (263 aa)) is DNA-binding. Disordered stretches follow at residues 238-268 (FKPKGADRKQKTDREKMEKRTPQEKEKYQPS) and 291-316 (SPGFNSSHNSFPIGEGNGSPNHQPEP). Residues 241 to 265 (KGADRKQKTDREKMEKRTPQEKEKY) show a composition bias toward basic and acidic residues. Residues 291 to 300 (SPGFNSSHNS) show a composition bias toward polar residues.

It belongs to the grh/CP2 family. CP2 subfamily. In terms of assembly, component of the SSP (stage selector protein) complex, which appears to be a heteromer of TFCP2 and 2 copies of NFE4.

The protein resides in the nucleus. Functionally, may function as a transcription factor. In Xenopus laevis (African clawed frog), this protein is Transcription factor CP2 (tfcp2).